A 312-amino-acid polypeptide reads, in one-letter code: tRNA dimethylallyltransferase (312 aa).

10 to 17 provides a ligand contact to ATP; the sequence is GPTGVGKT. 12–17 provides a ligand contact to substrate; that stretch reads TGVGKT.

Belongs to the IPP transferase family. In terms of assembly, monomer. It depends on Mg(2+) as a cofactor.

The catalysed reaction is adenosine(37) in tRNA + dimethylallyl diphosphate = N(6)-dimethylallyladenosine(37) in tRNA + diphosphate. Its function is as follows. Catalyzes the transfer of a dimethylallyl group onto the adenine at position 37 in tRNAs that read codons beginning with uridine, leading to the formation of N6-(dimethylallyl)adenosine (i(6)A). The sequence is that of tRNA dimethylallyltransferase from Coprothermobacter proteolyticus (strain ATCC 35245 / DSM 5265 / OCM 4 / BT).